A 753-amino-acid polypeptide reads, in one-letter code: Polyribonucleotide nucleotidyltransferase (753 aa).

Positions 543 and 549 each coordinate Mg(2+). The KH domain maps to P609 to I668. One can recognise an S1 motif domain in the interval G680–V749.

Belongs to the polyribonucleotide nucleotidyltransferase family. Mg(2+) serves as cofactor.

The protein resides in the cytoplasm. It catalyses the reaction RNA(n+1) + phosphate = RNA(n) + a ribonucleoside 5'-diphosphate. Functionally, involved in mRNA degradation. Catalyzes the phosphorolysis of single-stranded polyribonucleotides processively in the 3'- to 5'-direction. This is Polyribonucleotide nucleotidyltransferase from Corynebacterium glutamicum (strain R).